Here is a 524-residue protein sequence, read N- to C-terminus: Tyrosine-protein kinase HCK (524 aa).

Disordered regions lie at residues M1 to P20 and K35 to G71. G2 carries the N-myristoyl glycine lipid modification. Residue G3 is the site of S-palmitoyl cysteine attachment. A Phosphotyrosine; by autocatalysis modification is found at Y50. Residues S76–S136 enclose the SH3 domain. The 98-residue stretch at W142–C239 folds into the SH2 domain. T200 carries the phosphothreonine modification. Residue Y207 is modified to Phosphotyrosine. Residues L260–Y513 enclose the Protein kinase domain. ATP contacts are provided by residues L266 to V274 and K288. The Proton acceptor role is filled by D379. A Phosphotyrosine; by autocatalysis modification is found at Y409. A Phosphoserine modification is found at S460. Phosphotyrosine is present on Y520.

Belongs to the protein kinase superfamily. Tyr protein kinase family. SRC subfamily. Interacts with ADAM15. Interacts with FASLG. Interacts with ARRB1 and ARRB2. Interacts with FCGR1A; the interaction may be indirect. Interacts with IL6ST. Interacts (via SH3 domain) with ELMO1. Interacts (via SH3 domain) with TP73. Interacts with YAP1. Interacts with ABL1 and ITGB1, and thereby recruits ABL1 to activated ITGB1. Interacts (via SH2 domain) with FLT3 (tyrosine phosphorylated). Interacts with CBL. Interacts with VAV1, WAS and RAPGEF1. Interacts (via SH3 domain) with WDCP. In terms of processing, phosphorylated on several tyrosine residues. Autophosphorylated. Becomes rapidly phosphorylated upon activation of the immunoglobulin receptors FCGR1A and FCGR2A. Phosphorylation at Tyr-409 increases kinase activity. Phosphorylation at Tyr-520 inhibits kinase activity. Kinase activity is not required for phosphorylation at Tyr-520, suggesting that this site may be a target of other kinases. Post-translationally, ubiquitinated by CBL, leading to its degradation via the proteasome. Isoform 2 palmitoylation at position 2 requires prior myristoylation. Palmitoylation at position 3 is required for caveolar localization of isoform 2. As to expression, expressed strongly in spleen and at very low levels in thymus.

It localises to the cytoplasmic vesicle. Its subcellular location is the secretory vesicle. The protein localises to the cytoplasm. The protein resides in the cytosol. It is found in the membrane. It localises to the caveola. Its subcellular location is the lysosome. The protein localises to the cell projection. The protein resides in the podosome membrane. It is found in the cell membrane. It localises to the cell junction. Its subcellular location is the focal adhesion. The protein localises to the cytoskeleton. The protein resides in the golgi apparatus. It is found in the nucleus. It catalyses the reaction L-tyrosyl-[protein] + ATP = O-phospho-L-tyrosyl-[protein] + ADP + H(+). With respect to regulation, subject to autoinhibition, mediated by intramolecular interactions involving the SH2 and SH3 domains. Kinase activity is also regulated by phosphorylation at regulatory tyrosine residues. Phosphorylation at Tyr-409 is required for optimal activity. Phosphorylation at Tyr-520 inhibits kinase activity. Its function is as follows. Non-receptor tyrosine-protein kinase found in hematopoietic cells that transmits signals from cell surface receptors and plays an important role in the regulation of innate immune responses, including neutrophil, monocyte, macrophage and mast cell functions, phagocytosis, cell survival and proliferation, cell adhesion and migration. Acts downstream of receptors that bind the Fc region of immunoglobulins, such as FCGR1A and FCGR2A, but also CSF3R, PLAUR, the receptors for IFNG, IL2, IL6 and IL8, and integrins, such as ITGB1 and ITGB2. During the phagocytic process, mediates mobilization of secretory lysosomes, degranulation, and activation of NADPH oxidase to bring about the respiratory burst. Plays a role in the release of inflammatory molecules. Promotes reorganization of the actin cytoskeleton and actin polymerization, formation of podosomes and cell protrusions. Inhibits TP73-mediated transcription activation and TP73-mediated apoptosis. Phosphorylates CBL in response to activation of immunoglobulin gamma Fc region receptors. Phosphorylates ADAM15, BCR, ELMO1, FCGR2A, GAB1, GAB2, RAPGEF1, STAT5B, TP73, VAV1 and WAS. The polypeptide is Tyrosine-protein kinase HCK (Hck) (Rattus norvegicus (Rat)).